Consider the following 89-residue polypeptide: Small ribosomal subunit protein uS14B (89 aa).

The segment at 38–61 (KLPKDAHPSRLKLRDQTDGRPRGY) is disordered. Residues 39-58 (LPKDAHPSRLKLRDQTDGRP) are compositionally biased toward basic and acidic residues.

This sequence belongs to the universal ribosomal protein uS14 family. In terms of assembly, part of the 30S ribosomal subunit. Contacts proteins S3 and S10.

Functionally, binds 16S rRNA, required for the assembly of 30S particles and may also be responsible for determining the conformation of the 16S rRNA at the A site. The protein is Small ribosomal subunit protein uS14B of Enterococcus faecalis (strain ATCC 700802 / V583).